The following is a 179-amino-acid chain: Protein GrpE (179 aa).

Positions 1 to 20 (MSEETKEEIKNEKVDEEVTE) are disordered.

Belongs to the GrpE family. As to quaternary structure, homodimer.

It localises to the cytoplasm. Functionally, participates actively in the response to hyperosmotic and heat shock by preventing the aggregation of stress-denatured proteins, in association with DnaK and GrpE. It is the nucleotide exchange factor for DnaK and may function as a thermosensor. Unfolded proteins bind initially to DnaJ; upon interaction with the DnaJ-bound protein, DnaK hydrolyzes its bound ATP, resulting in the formation of a stable complex. GrpE releases ADP from DnaK; ATP binding to DnaK triggers the release of the substrate protein, thus completing the reaction cycle. Several rounds of ATP-dependent interactions between DnaJ, DnaK and GrpE are required for fully efficient folding. This chain is Protein GrpE, found in Lactococcus lactis subsp. lactis (strain IL1403) (Streptococcus lactis).